Here is a 347-residue protein sequence, read N- to C-terminus: Neutral protease 2 homolog MGG_10927 (347 aa).

The N-terminal stretch at 1 to 19 (MKYSVGITALLATLAQGAA) is a signal peptide. A propeptide spanning residues 20–176 (VMSKRDIPLD…RSYLAKRTMV (157 aa)) is cleaved from the precursor. Disulfide bonds link Cys180-Cys250 and Cys257-Cys275. His299 lines the Zn(2+) pocket. Glu300 is an active-site residue. Position 303 (His303) interacts with Zn(2+).

This sequence belongs to the peptidase M35 family. It depends on Zn(2+) as a cofactor.

The protein resides in the secreted. The enzyme catalyses Preferential cleavage of bonds with hydrophobic residues in P1'. Also 3-Asn-|-Gln-4 and 8-Gly-|-Ser-9 bonds in insulin B chain.. Its function is as follows. Secreted metalloproteinase that allows assimilation of proteinaceous substrates. Shows high activities on basic nuclear substrates such as histone and protamine. The chain is Neutral protease 2 homolog MGG_10927 from Pyricularia oryzae (strain 70-15 / ATCC MYA-4617 / FGSC 8958) (Rice blast fungus).